The chain runs to 217 residues: Cytokinin riboside 5'-monophosphate phosphoribohydrolase LOG7 (217 aa).

Substrate contacts are provided by residues Glu79, 97 to 98, 114 to 120, and Thr126; these read RK and GYGTLEE.

It belongs to the LOG family. As to expression, expressed in roots and shoots. Detected in the epidermis of the root elongation zone, cotyledon and leaves, in trichomes and pollen.

Its subcellular location is the cytoplasm. It is found in the nucleus. It catalyses the reaction N(6)-(dimethylallyl)adenosine 5'-phosphate + H2O = N(6)-dimethylallyladenine + D-ribose 5-phosphate. The enzyme catalyses 9-ribosyl-trans-zeatin 5'-phosphate + H2O = trans-zeatin + D-ribose 5-phosphate. Functionally, cytokinin-activating enzyme working in the direct activation pathway. Phosphoribohydrolase that converts inactive cytokinin nucleotides to the biologically active free-base forms. This chain is Cytokinin riboside 5'-monophosphate phosphoribohydrolase LOG7 (LOG7), found in Arabidopsis thaliana (Mouse-ear cress).